Consider the following 444-residue polypeptide: Aspartate--tRNA(Asp/Asn) ligase (444 aa).

Residue Glu176 coordinates L-aspartate. Residues 198–201 are aspartate; that stretch reads QLFK. An L-aspartate-binding site is contributed by Arg220. ATP-binding positions include 220–222, 228–230, and Glu367; these read RAE and RHL. Mg(2+) is bound by residues Glu367 and Ser370. Ser370 and Arg374 together coordinate L-aspartate. 415–418 is a binding site for ATP; that stretch reads GCER.

It belongs to the class-II aminoacyl-tRNA synthetase family. Type 2 subfamily. In terms of assembly, homodimer. Mg(2+) is required as a cofactor.

The protein localises to the cytoplasm. The enzyme catalyses tRNA(Asx) + L-aspartate + ATP = L-aspartyl-tRNA(Asx) + AMP + diphosphate. Its function is as follows. Aspartyl-tRNA synthetase with relaxed tRNA specificity since it is able to aspartylate not only its cognate tRNA(Asp) but also tRNA(Asn). Reaction proceeds in two steps: L-aspartate is first activated by ATP to form Asp-AMP and then transferred to the acceptor end of tRNA(Asp/Asn). The sequence is that of Aspartate--tRNA(Asp/Asn) ligase from Methanosarcina acetivorans (strain ATCC 35395 / DSM 2834 / JCM 12185 / C2A).